Here is a 660-residue protein sequence, read N- to C-terminus: DNA ligase (660 aa).

NAD(+) contacts are provided by residues 32–36 (DEVYD), 81–82 (SM), and E112. Residue K114 is the N6-AMP-lysine intermediate of the active site. Positions 135, 169, 284, and 308 each coordinate NAD(+). Zn(2+)-binding residues include C402, C405, C418, and C423. Residues 578-660 (VENSPLAHKT…ELLKEAGIEA (83 aa)) form the BRCT domain.

It belongs to the NAD-dependent DNA ligase family. LigA subfamily. It depends on Mg(2+) as a cofactor. The cofactor is Mn(2+).

The enzyme catalyses NAD(+) + (deoxyribonucleotide)n-3'-hydroxyl + 5'-phospho-(deoxyribonucleotide)m = (deoxyribonucleotide)n+m + AMP + beta-nicotinamide D-nucleotide.. Its function is as follows. DNA ligase that catalyzes the formation of phosphodiester linkages between 5'-phosphoryl and 3'-hydroxyl groups in double-stranded DNA using NAD as a coenzyme and as the energy source for the reaction. It is essential for DNA replication and repair of damaged DNA. The protein is DNA ligase of Nitratiruptor sp. (strain SB155-2).